Here is a 564-residue protein sequence, read N- to C-terminus: Kelch repeat and BTB domain-containing protein 1 (564 aa).

The BTB domain maps to 21 to 88 (CDIDIVINDE…IYGIPLSLTN (68 aa)). One can recognise a BACK domain in the interval 123 to 219 (CIDFYIYADK…SLLSPQVIKS (97 aa)). 6 Kelch repeats span residues 252–297 (IELI…VLDN), 298–346 (IIYM…ADDE), 347–395 (YIYC…MLNG), 397–441 (IYVI…VHAG), 442–492 (KIYI…SVHN), and 494–539 (LYVG…CEPI).

Interacts (via BTB domain) with host CUL3.

It localises to the host cytoplasm. Functionally, probable substrate-specific adapter of CUL3-containing E3 ubiquitin-protein ligases which mediate the ubiquitination and subsequent proteasomal degradation of host target proteins. The sequence is that of Kelch repeat and BTB domain-containing protein 1 (KBTB1) from Camelus.